Here is a 428-residue protein sequence, read N- to C-terminus: UDP-N-acetylglucosamine 1-carboxyvinyltransferase (428 aa).

25–26 (KN) contributes to the phosphoenolpyruvate binding site. R102 provides a ligand contact to UDP-N-acetyl-alpha-D-glucosamine. C126 (proton donor) is an active-site residue. C126 bears the 2-(S-cysteinyl)pyruvic acid O-phosphothioketal mark. Residues D316 and V338 each contribute to the UDP-N-acetyl-alpha-D-glucosamine site.

It belongs to the EPSP synthase family. MurA subfamily.

The protein resides in the cytoplasm. It carries out the reaction phosphoenolpyruvate + UDP-N-acetyl-alpha-D-glucosamine = UDP-N-acetyl-3-O-(1-carboxyvinyl)-alpha-D-glucosamine + phosphate. The protein operates within cell wall biogenesis; peptidoglycan biosynthesis. In terms of biological role, cell wall formation. Adds enolpyruvyl to UDP-N-acetylglucosamine. This Anaplasma marginale (strain Florida) protein is UDP-N-acetylglucosamine 1-carboxyvinyltransferase.